Reading from the N-terminus, the 563-residue chain is NAD(P)H-quinone oxidoreductase chain 4 (563 aa).

15 consecutive transmembrane segments (helical) span residues 25–45 (FPWLSLSILFPIVGAFLVPFI), 56–76 (WFALGIALVTFVITVAAYLYG), 90–110 (VSWLPDLGLTWAVGADGISMP), 111–131 (LILLTSFITALAVLAAWPVTF), 133–153 (PKLFFFLILAMDGGQIAVFAV), 157–177 (LLFFLAWELELLPVYLLLAIW), 189–209 (FIIYTAGSSLFILLVALAMGF), 230–250 (GFQLLCYAGLLIAFGVKLPIV), 264–284 (TAPVHMLLAGILLKMGGYALM), 298–318 (FAPLLIVLGVVNIIYAALTSF), 335–355 (MGFVLIGIGSFSALGTSGAML), 356–376 (QMISHGLIGASLFFLVGATYD), 397–417 (FALWTVCALASLALPGMSGFV), 438–458 (IVIAGLAAIGVILTPIYLLSM), and 485–505 (VYIISCLLVPIIGIGLYPRLM).

The protein belongs to the complex I subunit 4 family.

The protein resides in the cellular thylakoid membrane. The catalysed reaction is a plastoquinone + NADH + (n+1) H(+)(in) = a plastoquinol + NAD(+) + n H(+)(out). It carries out the reaction a plastoquinone + NADPH + (n+1) H(+)(in) = a plastoquinol + NADP(+) + n H(+)(out). In terms of biological role, NDH-1 shuttles electrons from NAD(P)H, via FMN and iron-sulfur (Fe-S) centers, to quinones in the respiratory chain. The immediate electron acceptor for the enzyme in this species is believed to be plastoquinone. Couples the redox reaction to proton translocation (for every two electrons transferred, four hydrogen ions are translocated across the cytoplasmic membrane), and thus conserves the redox energy in a proton gradient. The sequence is that of NAD(P)H-quinone oxidoreductase chain 4 from Prochlorococcus marinus (strain MIT 9303).